A 621-amino-acid polypeptide reads, in one-letter code: Rab proteins geranylgeranyltransferase component A 2 (621 aa).

Residues 113-171 (VQDTETLQRSSPLEASATPADSLDSASLPKERQSAYSTSYEVPSRHTEESDRELSLPSA) form a disordered region. The segment covering 115 to 125 (DTETLQRSSPL) has biased composition (polar residues). Basic and acidic residues predominate over residues 155–166 (PSRHTEESDREL).

Belongs to the Rab GDI family. Monomer. Heterotrimer composed of RABGGTA, RABGGTB and CHML; within this trimer, RABGGTA and RABGGTB form the catalytic component B, while CHML (component A) mediates Rab protein binding. Interacts with RAB1A, RAB7A and RAB27A, but has much lower affinity for RAB1A, RAB7A and RAB27A than CHM. Interacts with the non-phosphorylated forms of RAB3A, RAB3B, RAB3C, RAB3D, RAB5B, RAB5C, RAB8A, RAB8B, RAB10, RAB12, RAB35, and RAB43.

It localises to the cytoplasm. The protein resides in the cytosol. Functionally, substrate-binding subunit (component A) of the Rab geranylgeranyltransferase (GGTase) complex. Binds unprenylated Rab proteins and presents the substrate peptide to the catalytic component B. The component A is thought to be regenerated by transferring its prenylated Rab back to the donor membrane. Less effective than CHM in supporting prenylation of Rab3 family. The sequence is that of Rab proteins geranylgeranyltransferase component A 2 (Chml) from Mus musculus (Mouse).